The chain runs to 158 residues: Protein hunchback (158 aa).

The span at 18–34 (HNHHHHHHHGHHQHQQR) shows a compositional bias: basic residues. 2 disordered regions span residues 18–96 (HNHH…TTTA) and 118–158 (LTPP…KYMA). A compositionally biased stretch (polar residues) spans 41 to 50 (ASSPHQSPLP). The segment covering 52–65 (LQLEQYLKQQQQQP) has biased composition (low complexity). Positions 139–158 (EPEKEHDLMSNSSEDMKYMA) are enriched in basic and acidic residues.

It belongs to the hunchback C2H2-type zinc-finger protein family.

The protein resides in the nucleus. Functionally, gap class segmentation protein that controls development of head structures. The protein is Protein hunchback (hb) of Drosophila mimica (Fruit fly).